We begin with the raw amino-acid sequence, 129 residues long: Modulator protein MzrA (129 aa).

The Cytoplasmic segment spans residues 1-14; it reads MINFRGRFGRPLWH. Residues 15–35 traverse the membrane as a helical segment; the sequence is YLVLPVVLLLLAVILLTPMIV. Residues 36–129 are Periplasmic-facing; that stretch reads QTESTLKIRP…VFRSNQQNLG (94 aa).

The protein belongs to the MzrA family. Interacts with EnvZ.

Its subcellular location is the cell inner membrane. Its function is as follows. Modulates the activity of the EnvZ/OmpR two-component regulatory system, probably by directly modulating EnvZ enzymatic activity and increasing stability of phosphorylated OmpR. The chain is Modulator protein MzrA from Yersinia pestis (strain Pestoides F).